The primary structure comprises 149 residues: Small heat shock protein IbpB (149 aa).

One can recognise a sHSP domain in the interval 26–137 (SQEPIDFPPY…QPQRIAIGGG (112 aa)).

This sequence belongs to the small heat shock protein (HSP20) family. Homodimer. Forms homomultimers of about 100-150 subunits at optimal growth temperatures. Conformation changes to oligomers at high temperatures or high ionic concentrations. The decrease in size of the multimers is accompanied by an increase in chaperone activity.

The protein localises to the cytoplasm. Its function is as follows. Associates with aggregated proteins, together with IbpA, to stabilize and protect them from irreversible denaturation and extensive proteolysis during heat shock and oxidative stress. Aggregated proteins bound to the IbpAB complex are more efficiently refolded and reactivated by the ATP-dependent chaperone systems ClpB and DnaK/DnaJ/GrpE. Its activity is ATP-independent. The sequence is that of Small heat shock protein IbpB from Pectobacterium carotovorum subsp. carotovorum (strain PC1).